The sequence spans 37 residues: MKIRASVRKICEKCRLIRRRKRLLVICYNPRHKQKQG.

The protein belongs to the bacterial ribosomal protein bL36 family.

It localises to the plastid. The protein resides in the chloroplast. This chain is Large ribosomal subunit protein bL36c, found in Cryptomeria japonica (Japanese cedar).